A 62-amino-acid chain; its full sequence is Large ribosomal subunit protein bL28 (62 aa).

The protein belongs to the bacterial ribosomal protein bL28 family.

In Thermobifida fusca (strain YX), this protein is Large ribosomal subunit protein bL28.